The following is a 410-amino-acid chain: Ribulose bisphosphate carboxylase large chain (410 aa).

2 residues coordinate substrate: Asn100 and Thr150. The active-site Proton acceptor is the Lys152. A substrate-binding site is contributed by Lys154. The Mg(2+) site is built by Lys178, Asp180, and Glu181. Lys178 is modified (N6-carboxylysine). His271 serves as the catalytic Proton acceptor. The substrate site is built by Arg272, His304, and Ser356.

It belongs to the RuBisCO large chain family. Type I subfamily. In terms of assembly, heterohexadecamer of 8 large chains and 8 small chains; disulfide-linked. The disulfide link is formed within the large subunit homodimers. Requires Mg(2+) as cofactor. In terms of processing, the disulfide bond which can form in the large chain dimeric partners within the hexadecamer appears to be associated with oxidative stress and protein turnover.

The protein resides in the plastid. It localises to the chloroplast. It catalyses the reaction 2 (2R)-3-phosphoglycerate + 2 H(+) = D-ribulose 1,5-bisphosphate + CO2 + H2O. The catalysed reaction is D-ribulose 1,5-bisphosphate + O2 = 2-phosphoglycolate + (2R)-3-phosphoglycerate + 2 H(+). Functionally, ruBisCO catalyzes two reactions: the carboxylation of D-ribulose 1,5-bisphosphate, the primary event in carbon dioxide fixation, as well as the oxidative fragmentation of the pentose substrate in the photorespiration process. Both reactions occur simultaneously and in competition at the same active site. In Gleichenia japonica (Urajiro), this protein is Ribulose bisphosphate carboxylase large chain (rbcL).